The primary structure comprises 318 residues: Pantothenate kinase (318 aa).

Residue 96–103 (GSVAVGKS) participates in ATP binding.

The protein belongs to the prokaryotic pantothenate kinase family.

The protein localises to the cytoplasm. The enzyme catalyses (R)-pantothenate + ATP = (R)-4'-phosphopantothenate + ADP + H(+). It participates in cofactor biosynthesis; coenzyme A biosynthesis; CoA from (R)-pantothenate: step 1/5. The chain is Pantothenate kinase from Coxiella burnetii (strain RSA 493 / Nine Mile phase I).